A 396-amino-acid polypeptide reads, in one-letter code: Purine ribonucleoside efflux pump NepI (396 aa).

The Cytoplasmic segment spans residues 1-21 (MSEFIAENRGADAITRPNWSA). A helical membrane pass occupies residues 22-42 (VFSVAFCVACLIIVEFLPVSL). Residues 43–54 (LTPMAQDLGISE) lie on the Periplasmic side of the membrane. The helical transmembrane segment at 55–75 (GVAGQSVTVTAFVAMFASLFI) threads the bilayer. Topologically, residues 76-85 (TQTIQATDRR) are cytoplasmic. A helical transmembrane segment spans residues 86-106 (YVVILFAVLLTLSCLLVSFAN). A topological domain (periplasmic) is located at residue serine 107. The helical transmembrane segment at 108–128 (FSLLLIGRACLGLALGGFWAM) threads the bilayer. Residues 129–147 (SASLTMRLVPPRTVPKALS) lie on the Cytoplasmic side of the membrane. Residues 148–168 (VIFGAVSIALVIAAPLGCFLG) form a helical membrane-spanning segment. Over 169–175 (ELIGWRN) the chain is Periplasmic. Residues 176-196 (VFNAAAAMGVLCIFWIIKSLP) traverse the membrane as a helical segment. Residues 197–215 (SLPGEPSHQKQNTFRLLQR) lie on the Cytoplasmic side of the membrane. A helical transmembrane segment spans residues 216–236 (PGVMAGMIAIFMSFAGQFAFF). At 237 to 255 (TYIRPVYMTLAGFGVDGLT) the chain is on the periplasmic side. A helical transmembrane segment spans residues 256 to 276 (LVLLSFGIASFVGTSLSSFIL). Topologically, residues 277–281 (KRSVK) are cytoplasmic. A helical membrane pass occupies residues 282-302 (LALAGAPFVLALSALVLTLWG). Residues 303 to 305 (SDK) lie on the Periplasmic side of the membrane. A helical membrane pass occupies residues 306-326 (IVATGVAIIWGLTFALIPVGW). The Cytoplasmic segment spans residues 327-343 (STWITRSLADQAEKAGS). Residues 344–364 (IQVAVIQLANTCGAAIGGYAL) form a helical membrane-spanning segment. The Periplasmic portion of the chain corresponds to 365–366 (DN). The helical transmembrane segment at 367–387 (IGLTSPLMLSGTLMLLTALLV) threads the bilayer. The Cytoplasmic segment spans residues 388 to 396 (TAKVKMKKS).

This sequence belongs to the major facilitator superfamily. DHA1 family. NepI (TC 2.A.1.2.26) subfamily.

Its subcellular location is the cell inner membrane. The catalysed reaction is inosine(in) + H(+)(out) = inosine(out) + H(+)(in). The enzyme catalyses guanosine(in) + H(+)(out) = guanosine(out) + H(+)(in). In terms of biological role, involved in the efflux of purine ribonucleosides, such as inosine and guanosine. This Escherichia coli O157:H7 protein is Purine ribonucleoside efflux pump NepI.